Consider the following 118-residue polypeptide: Ribosome-binding factor A (118 aa).

The protein belongs to the RbfA family. As to quaternary structure, monomer. Binds 30S ribosomal subunits, but not 50S ribosomal subunits or 70S ribosomes.

The protein localises to the cytoplasm. Functionally, one of several proteins that assist in the late maturation steps of the functional core of the 30S ribosomal subunit. Associates with free 30S ribosomal subunits (but not with 30S subunits that are part of 70S ribosomes or polysomes). Required for efficient processing of 16S rRNA. May interact with the 5'-terminal helix region of 16S rRNA. The chain is Ribosome-binding factor A from Dehalococcoides mccartyi (strain ATCC BAA-2100 / JCM 16839 / KCTC 5957 / BAV1).